A 288-amino-acid polypeptide reads, in one-letter code: Phosphatidylglycerol--prolipoprotein diacylglyceryl transferase (288 aa).

4 consecutive transmembrane segments (helical) span residues 8–28 (IGPI…FVGI), 49–69 (AFVA…LFNL), 79–99 (ILAV…GIAG), and 109–129 (INPL…QAIG). Arg-130 lines the a 1,2-diacyl-sn-glycero-3-phospho-(1'-sn-glycerol) pocket. 3 helical membrane passes run 203-223 (PAML…WFIL), 232-252 (GYMW…VSFF), and 259-279 (FFNF…SIFF).

It belongs to the Lgt family.

Its subcellular location is the cell inner membrane. It carries out the reaction L-cysteinyl-[prolipoprotein] + a 1,2-diacyl-sn-glycero-3-phospho-(1'-sn-glycerol) = an S-1,2-diacyl-sn-glyceryl-L-cysteinyl-[prolipoprotein] + sn-glycerol 1-phosphate + H(+). Its pathway is protein modification; lipoprotein biosynthesis (diacylglyceryl transfer). Catalyzes the transfer of the diacylglyceryl group from phosphatidylglycerol to the sulfhydryl group of the N-terminal cysteine of a prolipoprotein, the first step in the formation of mature lipoproteins. This Fusobacterium nucleatum subsp. nucleatum (strain ATCC 25586 / DSM 15643 / BCRC 10681 / CIP 101130 / JCM 8532 / KCTC 2640 / LMG 13131 / VPI 4355) protein is Phosphatidylglycerol--prolipoprotein diacylglyceryl transferase.